A 492-amino-acid polypeptide reads, in one-letter code: Octanoyltransferase (492 aa).

The unknown stretch occupies residues 1–255 (MRCILLGSGT…GYDGLEAIID (255 aa)). Residues 256 to 492 (EKGIRIKDFE…AVFRRNFGAL (237 aa)) are lipB domain. The BPL/LPL catalytic domain maps to 305–492 (RKPQNTLLFC…AVFRRNFGAL (188 aa)). Residues 350-357 (RGGDITYH), 423-425 (AIG), and 436-438 (GFA) contribute to the substrate site. Cys454 serves as the catalytic Acyl-thioester intermediate.

In the C-terminal section; belongs to the LipB family.

The protein resides in the cytoplasm. The enzyme catalyses octanoyl-[ACP] + L-lysyl-[protein] = N(6)-octanoyl-L-lysyl-[protein] + holo-[ACP] + H(+). The protein operates within protein modification; protein lipoylation via endogenous pathway; protein N(6)-(lipoyl)lysine from octanoyl-[acyl-carrier-protein]: step 1/2. In terms of biological role, catalyzes the transfer of endogenously produced octanoic acid from octanoyl-acyl-carrier-protein onto the lipoyl domains of lipoate-dependent enzymes. Lipoyl-ACP can also act as a substrate although octanoyl-ACP is likely to be the physiological substrate. This is Octanoyltransferase from Porphyromonas gingivalis (strain ATCC BAA-308 / W83).